A 232-amino-acid polypeptide reads, in one-letter code: Large ribosomal subunit protein uL1 (232 aa).

Belongs to the universal ribosomal protein uL1 family. As to quaternary structure, part of the 50S ribosomal subunit.

Binds directly to 23S rRNA. The L1 stalk is quite mobile in the ribosome, and is involved in E site tRNA release. Functionally, protein L1 is also a translational repressor protein, it controls the translation of the L11 operon by binding to its mRNA. The sequence is that of Large ribosomal subunit protein uL1 from Sinorhizobium fredii (strain NBRC 101917 / NGR234).